The chain runs to 758 residues: MDVNPTLLFLKVPAQNAISTTFPYTGDPPYSHGTGTGYTMDTVNRTHQYSEKGKWTTNTETGAPQLNPIDGPLPEDNEPSGYAQTDCVLEAMAFLEESHPGIFENSCLETMEVVQQTRVDKLTQGRQTYDWTLNRNQPAATALANTIEVFRSNGLTANDSGRLIDFLKDVMESMDKEEVEITTHFQRKRRVRDNITKKMVTQRTIGKKKQRLNKRSYLIRALTLNTMTKDAERGKLKRRAIATPGMQIRGFVYFVETLARSICEKLEQSGLPVGGNEKKAKLANVVRKMMTNSQDTELSFTITGDNTKWNENQNPRMFLAMITYITRNQPEWFRNILSIAPIMFSNKMARLGKGYMFESKSMKLRTQIPAEMLASIDLKYFNESTRKKIEKIRPLLIDGTASLSPGMMMGMFNMLSTVLGVSILNLGQKRYTKTTYWWDGLQSSDDFALIVNAPNHEGIQAGVDRFYRTCKLVGINMSKKKSYINRTGTFEFTSFFYRYGFVANFSMELPSFGVSGINESADMSIGVTVIKNNMINNDLGPATAQMALQLFIKDYRYTYRCHRGDTQIQTRRSFELKKLWEQTHSKAGLLVSDGGPNLYNIRNLHIPEVCLKWELMDEDYQGRLCNPLNPFVSHKEIESVNNAVVMPAHGPAKSMEYDAVATTHSWIPKRNRSILNTSQRGILEDEQMYQKCCNLFEKFFPSSSYRRPVGISSMVEAMVSRARIDARIDFESGRIKKEEFAEIMKICSTIEELRRQKQ.

Residues 50 to 82 (SEKGKWTTNTETGAPQLNPIDGPLPEDNEPSGY) are disordered. The span at 55–64 (WTTNTETGAP) shows a compositional bias: polar residues. 2 short sequence motifs (nuclear localization signal) span residues 187–195 (RKRRVRDNI) and 203–216 (RTIGKKKQRLNKRS). Positions 249-256 (RGFVYFVE) are promoter-binding site. Positions 286 to 483 (VRKMMTNSQD…GINMSKKKSY (198 aa)) constitute a RdRp catalytic domain.

The protein belongs to the influenza viruses polymerase PB1 family. As to quaternary structure, influenza RNA polymerase is composed of three subunits: PB1, PB2 and PA. Interacts (via N-terminus) with PA (via C-terminus). Interacts (via C-terminus) with PB2 (via N-terminus); this interaction is essential for transcription initiation. Phosphorylated by host PRKCA.

Its subcellular location is the host nucleus. The protein resides in the host cytoplasm. It carries out the reaction RNA(n) + a ribonucleoside 5'-triphosphate = RNA(n+1) + diphosphate. Functionally, RNA-dependent RNA polymerase which is responsible for replication and transcription of virus RNA segments. The transcription of viral mRNAs occurs by a unique mechanism called cap-snatching. 5' methylated caps of cellular mRNAs are cleaved after 10-13 nucleotides by PA. In turn, these short capped RNAs are used as primers by PB1 for transcription of viral mRNAs. During virus replication, PB1 initiates RNA synthesis and copy vRNA into complementary RNA (cRNA) which in turn serves as a template for the production of more vRNAs. This chain is RNA-directed RNA polymerase catalytic subunit, found in Influenza A virus (strain A/Chicken/Scotland/1959 H5N1).